The following is a 545-amino-acid chain: CTP synthase (545 aa).

An amidoligase domain region spans residues 1–266 (MATNYIFVTG…DDFVCERFRL (266 aa)). A CTP-binding site is contributed by Ser-14. A UTP-binding site is contributed by Ser-14. Residues 15 to 20 (SLGKGI) and Asp-72 contribute to the ATP site. Asp-72 and Glu-140 together coordinate Mg(2+). CTP is bound by residues 147–149 (DIE), 187–192 (KTKPTQ), and Lys-223. UTP contacts are provided by residues 187–192 (KTKPTQ) and Lys-223. 239 to 241 (KDV) contributes to the ATP binding site. One can recognise a Glutamine amidotransferase type-1 domain in the interval 291-542 (TIGMVGKYTE…VKAAYENHKK (252 aa)). Gly-352 contacts L-glutamine. The Nucleophile; for glutamine hydrolysis role is filled by Cys-379. L-glutamine is bound by residues 380-383 (LGMQ), Glu-403, and Arg-470. Active-site residues include His-515 and Glu-517.

The protein belongs to the CTP synthase family. As to quaternary structure, homotetramer.

The catalysed reaction is UTP + L-glutamine + ATP + H2O = CTP + L-glutamate + ADP + phosphate + 2 H(+). It catalyses the reaction L-glutamine + H2O = L-glutamate + NH4(+). The enzyme catalyses UTP + NH4(+) + ATP = CTP + ADP + phosphate + 2 H(+). Its pathway is pyrimidine metabolism; CTP biosynthesis via de novo pathway; CTP from UDP: step 2/2. Allosterically activated by GTP, when glutamine is the substrate; GTP has no effect on the reaction when ammonia is the substrate. The allosteric effector GTP functions by stabilizing the protein conformation that binds the tetrahedral intermediate(s) formed during glutamine hydrolysis. Inhibited by the product CTP, via allosteric rather than competitive inhibition. In terms of biological role, catalyzes the ATP-dependent amination of UTP to CTP with either L-glutamine or ammonia as the source of nitrogen. Regulates intracellular CTP levels through interactions with the four ribonucleotide triphosphates. This is CTP synthase from Haemophilus influenzae (strain PittGG).